Here is a 266-residue protein sequence, read N- to C-terminus: Integral membrane protein 2B (266 aa).

Over 1–54 (MVKVTFNSALAQKEAKKDEPKSSEEALIVPPDAVAVDCKDPGDVVPVGQRRAWC) the chain is Cytoplasmic. A helical; Signal-anchor for type II membrane protein membrane pass occupies residues 55–75 (WCMCFGLAFMLAGVILGGAYL). Over 76-266 (YKYFALQPDD…KFAVETLICS (191 aa)) the chain is Lumenal. Residues 102–134 (EPSADAPAARYQTIEENIKIFEEDAVEFISVPV) are necessary for interaction with APP and inhibitor effects on APP processing. Residues 137 to 231 (FADSDPANIV…LCHDKETYKL (95 aa)) enclose the BRICHOS domain. Cystine bridges form between cysteine 164–cysteine 223 and cysteine 248–cysteine 265. Asparagine 170 carries N-linked (GlcNAc...) asparagine glycosylation.

This sequence belongs to the ITM2 family. In terms of assembly, homodimer; disulfide-linked. Interacts with SPPL2A and SPPL2B. Interacts with APP. Mature BRI2 (mBRI2) interacts with the APP amyloid-beta A4 protein; the interaction occurs at the cell surface and in the endocytic compartments and enable alpha- and beta-secretase-induced APP cleavage inhibition. Mature BRI2 (mBRI2) interacts with the APP C99; the interaction occurs in the endocytic compartments and enable gamma-secretase-induced C99 cleavage inhibition. May form heterodimers with Bri23 peptide and APP amyloid-beta protein 40. Interacts with ADAM7 in sperm; the interaction increases following capacitation. Post-translationally, the ectodomain C-terminal part of the imBRI2 is processed by furin producing a secreted Bri23 peptide and a mature BRI2, membrane form (mBRI2). The remaining part of the ectodomain of mBRI2 containing the BRICHOS domain is cleaved by ADAM10 and is secreted (BRI2C, soluble form). The membrane-bound N-terminal fragment (BRI2C, membrane form) is further proteolytically processed by SPPL2A and SPPL2B through regulated intramembrane proteolysis producing a secreted C-peptide and a BRI2 intracellular domain (BRI2 ICD) released in the cytosol. Shedding by ADAM10 facilitates intramembrane cleavage but is not absolutely required for BRI2 ICD generation. In terms of processing, glycosylation at Asn-170 is important for cell surface localization, but doesn't affect furin- and ADAM10-induced proteolytic processing. In terms of tissue distribution, expressed in the brain, testis, testicular sperm, epididymis and mature epididymal sperm (at protein level).

It localises to the golgi apparatus membrane. It is found in the cell membrane. Its subcellular location is the endosome membrane. The protein resides in the secreted. Plays a regulatory role in the processing of the amyloid-beta A4 precursor protein (APP) and acts as an inhibitor of the amyloid-beta peptide aggregation and fibrils deposition. Plays a role in the induction of neurite outgrowth. Functions as a protease inhibitor by blocking access of secretases to APP cleavage sites. Its function is as follows. Mature BRI2 (mBRI2) functions as a modulator of the amyloid-beta A4 precursor protein (APP) processing leading to a strong reduction in the secretion of secretase-processed amyloid-beta protein 40 and amyloid-beta protein 42. Functionally, bri23 peptide prevents aggregation of APP amyloid-beta protein 42 into toxic oligomers. The polypeptide is Integral membrane protein 2B (Itm2b) (Mus musculus (Mouse)).